Here is a 513-residue protein sequence, read N- to C-terminus: Zinc finger CCCH-type with G patch domain-containing protein (513 aa).

The C3H1-type zinc-finger motif lies at 155–178 (PCSYYLEGECRFDEAKCRFSHGAL). Positions 252–261 (DQDEDDELSS) are enriched in acidic residues. Residues 252-283 (DQDEDDELSSEESNSSMNDNSSDEAESDMDDL) form a disordered region. The segment covering 262 to 271 (EESNSSMNDN) has biased composition (low complexity). Acidic residues predominate over residues 272 to 283 (SSDEAESDMDDL). The G-patch domain maps to 312–358 (TRGIGSKLMEKMGYIHGTGLGSDGRGIVTPVSAQILPQGRSLDACME). Positions 478-495 (VQMQSHKQELATLQAQER) are enriched in polar residues. The tract at residues 478 to 513 (VQMQSHKQELATLQAQERSLSKEQQTRKSKNKMFEF) is disordered. Basic and acidic residues predominate over residues 496–513 (SLSKEQQTRKSKNKMFEF).

The protein localises to the nucleus. Transcription repressor. The chain is Zinc finger CCCH-type with G patch domain-containing protein from Drosophila melanogaster (Fruit fly).